Here is a 1983-residue protein sequence, read N- to C-terminus: Nonribosomal peptide synthetase verP (1983 aa).

Residues 11–405 form an adenylation 1 region; sequence FAQAASRCPD…FRGRKDRTVK (395 aa). The Carrier 1 domain maps to 526-602; it reads DRHLDTLLTV…DVAPLITSRA (77 aa). O-(pantetheine 4'-phosphoryl)serine is present on Ser-563. A condensation 1 region spans residues 769-1047; that stretch reads ETDELTVVLT…GQHFKHALYS (279 aa). The tract at residues 1089–1469 is adenylation 2; sequence QVMGQFPSLI…GRIDRLVKLR (381 aa). One can recognise a Carrier 2 domain in the interval 1584 to 1662; that stretch reads ITRPKIEDKL…DQINMVRALL (79 aa). Ser-1622 is subject to O-(pantetheine 4'-phosphoryl)serine. The segment at 1652–1976 is condensation 2; sequence KDQINMVRAL…GGLEHPLFEC (325 aa).

Belongs to the NRP synthetase family.

It functions in the pathway mycotoxin biosynthesis. Nonribosomal peptide synthetase; part of the gene cluster that mediates the biosynthesis of 11'-deoxyverticillin A, one of the dimeric epipolythiodioxopiperazines (ETPs) from the verticillin family that act as mycotoxins. 11'-deoxyverticillin A is required for normal conidiation. The nonribosomal peptide synthetase verP is speculated to be responsible for condensation of amino acids to form the carbon skeleton of verticillin, whereas the cluster-specific tailoring enzymes are involved in further modifications leading to the production of 11'-deoxyverticillin A. This chain is Nonribosomal peptide synthetase verP, found in Clonostachys rogersoniana.